Here is a 210-residue protein sequence, read N- to C-terminus: MPKGLLGKKVGMTQIFTDTGLAVPVTVIEAGPCIVVQKKTPEKDGYSAIQLGFGAKKERSFNKPMLGHFLAARVRPLRYLREVRVENPETYQVGQEIKADIFAPGEKVDVVGTTKGRGFAGGIKRHGFHRGPMAHGSKYHRRPGSLGAKGPARVFKGRRLPGHLGMERVTVQNLEVVKVDADRNLLAVKGAVPGPKGGLVLIKQAAKARG.

Residues 121–150 (GGIKRHGFHRGPMAHGSKYHRRPGSLGAKG) form a disordered region.

The protein belongs to the universal ribosomal protein uL3 family. Part of the 50S ribosomal subunit. Forms a cluster with proteins L14 and L19.

Its function is as follows. One of the primary rRNA binding proteins, it binds directly near the 3'-end of the 23S rRNA, where it nucleates assembly of the 50S subunit. The sequence is that of Large ribosomal subunit protein uL3 from Pelotomaculum thermopropionicum (strain DSM 13744 / JCM 10971 / SI).